The chain runs to 99 residues: Large ribosomal subunit protein eL30 (99 aa).

Belongs to the eukaryotic ribosomal protein eL30 family.

This is Large ribosomal subunit protein eL30 from Methanobrevibacter smithii (strain ATCC 35061 / DSM 861 / OCM 144 / PS).